An 83-amino-acid chain; its full sequence is MLVLSRRAGESVVLGEDVVVTILEVRGDVVRVGIDAPRSVRVHRAELLAQLEETNRQAASPSEDVIANLARALDHGTGTDPSS.

It belongs to the CsrA/RsmA family. As to quaternary structure, homodimer; the beta-strands of each monomer intercalate to form a hydrophobic core, while the alpha-helices form wings that extend away from the core.

Its subcellular location is the cytoplasm. In terms of biological role, a translational regulator that binds mRNA to regulate translation initiation and/or mRNA stability. Usually binds in the 5'-UTR at or near the Shine-Dalgarno sequence preventing ribosome-binding, thus repressing translation. Its main target seems to be the major flagellin gene, while its function is anatagonized by FliW. The sequence is that of Translational regulator CsrA from Nocardioides sp. (strain ATCC BAA-499 / JS614).